Here is a 474-residue protein sequence, read N- to C-terminus: Alkylcitrate dehydratase phiI (474 aa).

It belongs to the PrpD family. Monomer.

It catalyses the reaction (4E,11E)-2-hydroxytrideca-4,11-dien-1,2,3-tricarboxylate + 2 H(+) = [4-(deca-1,8-diyl)-2,5-dioxo-2,5-dihydro-3-furanyl]acetate + 2 H2O. It participates in secondary metabolite biosynthesis. In terms of biological role, alkylcitrate dehydratasee; part of the gene cluster that mediates the biosynthesis of the antihypercholesterolemic agents phomoidrides which are dimeric anhydrides. Within the pathway, the alkylcitrate synthase (ACS) tstiJ and the alkylcitrate dehydratase (ACDH) tstI produce the decarboxylated monomeric anhydrides by coupling the C12-fatty acyl product from phiA with oxalacetic acid. The pathway begins with the highly reducing polyketide synthase tstA that catalyzes the formation of a C12-fatty acyl-ACP, starting from one acetate and 5 malonate units. The hydrolase tstM is involved in the release of the C12-fatty acyl chain from phiA. The alkylcitrate synthase (ACS) tstJ and the alkylcitrate dehydratase (ACDH) tstI then give rise to decarboxylated monomeric anhydrides by coupling the C12-fatty acyl chain with oxalacetic acid. The cyclase tstC is responsible for the dimerization of the monomeric anhydrides which leads to the production of prephomoidride that contains the characteristic bicyclo[4.3.1]deca-1,6-diene system of phomoidrides. Iterative oxidation catalyzed by the alpha-ketoglutarate-dependent dioxygenase tstK produced then phomoidride A. Finally, the methyltransferase tstE converts phomoidride A to phomoidride B via an acetalization reaction. The phosphatidylethanolamine-binding protein tstB and tstN are not essential for dimerization and their functions have still to be determined. The chain is Alkylcitrate dehydratase phiI from Talaromyces stipitatus (strain ATCC 10500 / CBS 375.48 / QM 6759 / NRRL 1006) (Penicillium stipitatum).